A 951-amino-acid polypeptide reads, in one-letter code: MTINLGTANEFIARHIGPRAADEQAMLTALGFDSLDAMTAAVIPDSIKGTSVLGSHDGQSEADALAALKAIAGKNQLFKSYIGQGYYNTHTPAPILRNLLENPAWYTAYTPYQPEISQGRLEALLNFQTLISDLTGLPIANASLLDEATAAAEAMTFCKRLSKNKSSHAFFASVHCHPQTLDVLRTRAEPLGIEVVVGDERELGDVSAFFGALLQYPASNGEVFDYREVVQRFHAANALVAVAADLLALTLLTPPGEFDADVAIGSAQRFGVPLGFGGPHAAYFATRDAFKRDMPGRLVGVSIDRFGKTALRLAMQTREQHIRREKATSNICTAQVLLANIASMFAVYHGPAGLKRIAERTHALTAILAAGLKALGVQVVGASAFDTLTLATGTATASLHDKARAQGINLRQIDAAHVGLSLDETSTQADVESLWQLLGGEQAQPDFTALAASTGSLLPAALLRQSAILEHPVFNRYHSETELMRYLRRLADKDLALDRSMIPLGSCTMKLNAASEMIPVTWAEFGNLHPFAPAEQSQGYLQMTTELEAMLCAATGYDAVSLQPNAGSQGEYAGLLAIRAYHRSRGEGHRDICLIPSSAHGTNPATAHMAGMRVVVTACDARGNVDVEDLRAKAIEHRERLAAIMITYPSTHGVFEEAIGEICAIIHDNGGQVYIDGANMNAMVGLCAPGKFGGDVSHLNLHKTFCIPHGGGGPGVGPIGVKSHLAPFLPGHAQLENTQGAVCAAPFGSASILPITWMYIRMMGGAGLKRASQMAILNANYIARRLEEHYPVLYTGGNGLVAHECILDLRPLKDTSGISVDDVAKRLIDFGFHAPTMSFPVAGTLMIEPTESESKEELDRFCNAMIQIREEIRAVEDGSLDKDDNPLKNAPHTAAELVGEWTHGYSREQAVYPLASLVEGKYWPPVGRVDNVFGDRNLVCACPSIESYQDA.

Lys703 is modified (N6-(pyridoxal phosphate)lysine).

Belongs to the GcvP family. As to quaternary structure, the glycine cleavage system is composed of four proteins: P, T, L and H. It depends on pyridoxal 5'-phosphate as a cofactor.

The catalysed reaction is N(6)-[(R)-lipoyl]-L-lysyl-[glycine-cleavage complex H protein] + glycine + H(+) = N(6)-[(R)-S(8)-aminomethyldihydrolipoyl]-L-lysyl-[glycine-cleavage complex H protein] + CO2. The glycine cleavage system catalyzes the degradation of glycine. The P protein binds the alpha-amino group of glycine through its pyridoxal phosphate cofactor; CO(2) is released and the remaining methylamine moiety is then transferred to the lipoamide cofactor of the H protein. The protein is Glycine dehydrogenase (decarboxylating) 1 (gcvP1) of Pseudomonas putida (strain ATCC 47054 / DSM 6125 / CFBP 8728 / NCIMB 11950 / KT2440).